The sequence spans 216 residues: 3-isopropylmalate dehydratase small subunit (216 aa).

Belongs to the LeuD family. LeuD type 1 subfamily. Heterodimer of LeuC and LeuD.

The catalysed reaction is (2R,3S)-3-isopropylmalate = (2S)-2-isopropylmalate. Its pathway is amino-acid biosynthesis; L-leucine biosynthesis; L-leucine from 3-methyl-2-oxobutanoate: step 2/4. Catalyzes the isomerization between 2-isopropylmalate and 3-isopropylmalate, via the formation of 2-isopropylmaleate. This chain is 3-isopropylmalate dehydratase small subunit, found in Polaromonas sp. (strain JS666 / ATCC BAA-500).